The chain runs to 829 residues: MDYKYAPKRIEKKWQEHWEREKLFEVSEIPGREKFYLLEMFPYPSGRIHMGHVRNYSIGDVVARFLRMRGYNVLHPMGWDAFGMPAENAAIKAKTHPARWTYENIAYMRSQLKQLGFSYDWSREFATCDVSYYRWEQLFFLKMYEKGLAYKRSAYVNWCGTCLTVLANEQVEGGACWRCDQPVVQKEMEQWFFKITDYVEELLDYTHRLPGWPERVLTMQQNWIGKSLGSKLLFPLASGDGSITVFTTRADTLFGATFMSLAPEHPLVEGLCRGNPQESEVLRFVQAAKQAKRNDREAELLEKEGVFTGSCCINPVTGAKMPIYVANFVVMEYGTGAVMAVPAHDQRDFEFARKYGLPVKVVIKPADAAAAPAAQELSAAFEDDGVLVDSGAYSGMASAEARTAITADLAGKGLGEQTVQYRLRDWGISRQRYWGAPIPIVYCDKCGTVPVPEKDLPVVLPTDVALLPNGASPLPAHAPFLNTDCPRCGGPARRETDTMDTFVESSWYFARFACARYDQGPLDLPKVKYWMPVDQYIGGIEHAVLHLLYSRFFVKVLRDMGALEVDEPFRNLLTQGMVIKDGAKMSKSKGNVVDPDDMIKAYGADTVRLFCLFASPPEKDLEWSDQGVEGSFRFLSRIWRLVSDNLDALRSAPRHNGGGALPEPLEALHRKTHQTIKKVTEDIRDRFHFNTAIAAIMELVNQIYQVVEGGSRAGNIWPVVKEAVEALILLVSPMAPHIAEEIWHELGHTRSVLLEPWPEWSGKALQAEEVMLVVQVNGRLRSRITVPSDATPEQMEAAALADSRVQEFIAGKPVRKVVVVPKKIINVVV.

The 'HIGH' region motif lies at 42-52 (PYPSGRIHMGH). A 'KMSKS' region motif is present at residues 584–588 (KMSKS). Lys587 provides a ligand contact to ATP.

The protein belongs to the class-I aminoacyl-tRNA synthetase family.

It localises to the cytoplasm. It catalyses the reaction tRNA(Leu) + L-leucine + ATP = L-leucyl-tRNA(Leu) + AMP + diphosphate. The protein is Leucine--tRNA ligase of Syntrophobacter fumaroxidans (strain DSM 10017 / MPOB).